Consider the following 286-residue polypeptide: tRNA (guanine-N(7)-)-methyltransferase (286 aa).

A phosphoserine mark is found at Ser7 and Ser59. S-adenosyl-L-methionine-binding positions include Gly103, 126–127 (EI), 161–162 (NA), and Cys181. The active site involves Asp184. 259-261 (TEE) is an S-adenosyl-L-methionine binding site.

It belongs to the class I-like SAM-binding methyltransferase superfamily. TrmB family. In terms of assembly, forms a complex with TRM82.

It is found in the nucleus. The catalysed reaction is guanosine(46) in tRNA + S-adenosyl-L-methionine = N(7)-methylguanosine(46) in tRNA + S-adenosyl-L-homocysteine. Its pathway is tRNA modification; N(7)-methylguanine-tRNA biosynthesis. Functionally, methyltransferase that catalyzes the formation of N(7)-methylguanine at position 46 (m7G46) in tRNA, a modification required to maintain stability of tRNAs; its absence resulting in tRNA decay. Both the D-stem and T-stem structures of tRNAs are required for efficient methyltransferase activity. The chain is tRNA (guanine-N(7)-)-methyltransferase from Saccharomyces cerevisiae (strain YJM789) (Baker's yeast).